A 632-amino-acid chain; its full sequence is tRNA uridine 5-carboxymethylaminomethyl modification enzyme MnmG (632 aa).

13–18 (GGGHAG) lines the FAD pocket. An NAD(+)-binding site is contributed by 274 to 288 (GPRYCPSIEDKVMRF).

Belongs to the MnmG family. Homodimer. Heterotetramer of two MnmE and two MnmG subunits. Requires FAD as cofactor.

The protein localises to the cytoplasm. In terms of biological role, NAD-binding protein involved in the addition of a carboxymethylaminomethyl (cmnm) group at the wobble position (U34) of certain tRNAs, forming tRNA-cmnm(5)s(2)U34. In Dichelobacter nodosus (strain VCS1703A), this protein is tRNA uridine 5-carboxymethylaminomethyl modification enzyme MnmG.